Reading from the N-terminus, the 1909-residue chain is Receptor-type tyrosine-protein phosphatase F (1909 aa).

The signal sequence occupies residues 1–31 (MVPNTCTSVPLLPVGLPLLLLLSCIQFSSQA). The Extracellular segment spans residues 32–1266 (DSLPNFVRSP…RSVDQPEMLW (1235 aa)). 3 consecutive Ig-like C2-type domains span residues 35 to 125 (PNFV…AKLT), 137 to 225 (PTID…ANLY), and 233 to 315 (PRFS…AQVS). An intrachain disulfide couples Cys-56 to Cys-109. 68–77 (WMKKGKKVSS) provides a ligand contact to heparin. N-linked (GlcNAc...) asparagine glycosylation is present at Asn-119. Cys-158 and Cys-208 are disulfide-bonded. N-linked (GlcNAc...) asparagine glycans are attached at residues Asn-251 and Asn-296. A disulfide bond links Cys-254 and Cys-299. Fibronectin type-III domains are found at residues 322-412 (PPTS…TGEQ), 417-511 (PPLH…TQQG), 515-604 (QPSS…TAQS), 609-706 (PPQD…TNED), 711-819 (PPRK…TTGA), 820-914 (VPGK…PEDV), 918-1013 (FPLN…TSPA), and 1014-1098 (FATS…TAPD). A disordered region spans residues 399-418 (GPPSEPVETRTGEQAPSSPP). A glycan (N-linked (GlcNAc...) asparagine) is linked at Asn-721. N-linked (GlcNAc...) asparagine glycans are attached at residues Asn-963 and Asn-966. Residues 1267-1287 (VMGPVLAVVLIIIIVIAILLF) traverse the membrane as a helical segment. Residues 1288 to 1909 (KRKRASPLPK…YLGSFDHYAT (622 aa)) lie on the Cytoplasmic side of the membrane. Tyrosine-protein phosphatase domains follow at residues 1354–1609 (FSQE…LLEA) and 1641–1900 (MELE…ALEY). Residues Asp-1518, 1550 to 1556 (CSAGVGR), and Gln-1594 contribute to the substrate site. Cys-1550 acts as the Phosphocysteine intermediate in catalysis. Cys-1841 (phosphocysteine intermediate) is an active-site residue.

The protein belongs to the protein-tyrosine phosphatase family. Receptor class 2A subfamily.

The protein resides in the membrane. The enzyme catalyses O-phospho-L-tyrosyl-[protein] + H2O = L-tyrosyl-[protein] + phosphate. In terms of biological role, possible cell adhesion receptor. It possesses an intrinsic protein tyrosine phosphatase activity (PTPase). Its function is as follows. The first PTPase domain has enzymatic activity, while the second one seems to affect the substrate specificity of the first one. The protein is Receptor-type tyrosine-protein phosphatase F (ptprf) of Danio rerio (Zebrafish).